A 216-amino-acid chain; its full sequence is Redox-sensing transcriptional repressor Rex (216 aa).

The H-T-H motif DNA-binding region spans 20-59 (QYYRLFKSLVEENVTRTNSQLISEKIGVDAATIRRDFSLF). Residue 94 to 99 (GVGNLG) coordinates NAD(+).

The protein belongs to the transcriptional regulatory Rex family. As to quaternary structure, homodimer.

It localises to the cytoplasm. Its function is as follows. Modulates transcription in response to changes in cellular NADH/NAD(+) redox state. The protein is Redox-sensing transcriptional repressor Rex of Lactococcus lactis subsp. lactis (strain IL1403) (Streptococcus lactis).